Consider the following 211-residue polypeptide: PDR1 up-regulated protein 1 (211 aa).

The next 2 membrane-spanning stretches (helical) occupy residues 45–67 (ISKA…PYAY) and 82–99 (RTIL…NVAA).

The protein belongs to the PUP1 family.

The protein resides in the mitochondrion membrane. Functionally, mitochondrial protein that contributes to the enhanced virulence of C.glabrata strains that acquired azole resistance. This chain is PDR1 up-regulated protein 1, found in Candida glabrata (strain ATCC 2001 / BCRC 20586 / JCM 3761 / NBRC 0622 / NRRL Y-65 / CBS 138) (Yeast).